We begin with the raw amino-acid sequence, 131 residues long: Glycine cleavage system H protein (131 aa).

In terms of domain architecture, Lipoyl-binding spans 24 to 106 (RVTVGISDHA…YGEGWIFVVE (83 aa)). Lysine 65 is subject to N6-lipoyllysine.

Belongs to the GcvH family. As to quaternary structure, the glycine cleavage system is composed of four proteins: P, T, L and H. (R)-lipoate serves as cofactor.

Functionally, the glycine cleavage system catalyzes the degradation of glycine. The H protein shuttles the methylamine group of glycine from the P protein to the T protein. This Xanthomonas euvesicatoria pv. vesicatoria (strain 85-10) (Xanthomonas campestris pv. vesicatoria) protein is Glycine cleavage system H protein.